A 348-amino-acid polypeptide reads, in one-letter code: Rhodopsin (348 aa).

Met1 carries the post-translational modification N-acetylmethionine. Residues 1 to 36 (MNGTEGPNFYVPFSNKTGVVRSPFEAPQYYLAEPWQ) are Extracellular-facing. 2 N-linked (GlcNAc...) asparagine glycosylation sites follow: Asn2 and Asn15. The helical transmembrane segment at 37 to 61 (FSMLAAYMFLLIMLGFPINFLTLYV) threads the bilayer. The Cytoplasmic portion of the chain corresponds to 62 to 73 (TVQHKKLRTPLN). A helical membrane pass occupies residues 74–96 (YILLNLAVADLFMVFGGFTTTLY). Residues 97-110 (TSLHGYFVFGPTGC) lie on the Extracellular side of the membrane. Cys110 and Cys187 are oxidised to a cystine. Residues 111 to 133 (NLEGFFATLGGEIALWSLVVLAI) traverse the membrane as a helical segment. Residues 134-136 (ERY) carry the 'Ionic lock' involved in activated form stabilization motif. Topologically, residues 134–152 (ERYVVVCKPMSNFRFGENH) are cytoplasmic. A helical transmembrane segment spans residues 153 to 173 (AIMGVAFTWVMALACAAPPLV). Over 174-202 (GWSRYIPEGMQCSCGIDYYTPHEETNNES) the chain is Extracellular. Glu201 contributes to the Zn(2+) binding site. A helical membrane pass occupies residues 203-224 (FVIYMFVVHFIIPLIVIFFCYG). The Cytoplasmic segment spans residues 225 to 252 (QLVFTVKEAAAQQQESATTQKAEKEVTR). The helical transmembrane segment at 253–274 (MVIIMVIAFLICWLPYAGVAFY) threads the bilayer. Residues 275-286 (IFTHQGSDFGPI) are Extracellular-facing. Position 279 (Gln279) interacts with Zn(2+). Residues 287–308 (FMTIPAFFAKTSAVYNPVIYIM) traverse the membrane as a helical segment. At Lys296 the chain carries N6-(retinylidene)lysine. Residues 309–348 (MNKQFRNCMVTTLCCGKNPLGDDEASTTVSKTETSQVAPA) are Cytoplasmic-facing. Residues Cys322 and Cys323 are each lipidated (S-palmitoyl cysteine). An interaction with SAG region spans residues 330–348 (DDEASTTVSKTETSQVAPA). Ser334 is subject to Phosphoserine. A phosphothreonine mark is found at Thr335 and Thr336. Ser338 bears the Phosphoserine mark. Phosphothreonine is present on residues Thr340 and Thr342. Ser343 bears the Phosphoserine; by RK and GRK7 mark.

The protein belongs to the G-protein coupled receptor 1 family. Opsin subfamily. As to quaternary structure, homodimer. May form a complex composed of RHO, GRK1 and RCVRN in a Ca(2+)-dependent manner; RCVRN prevents the interaction between GRK1 and RHO. Interacts with GRK1. Interacts (phosphorylated form) with SAG. Interacts with GNAT1. Interacts with GNAT3. SAG and G-proteins compete for a common binding site. Interacts with PRCD; the interaction promotes PRCD stability. Forms a complex with ASAP1 and ARF4. Forms a complex with ASAP1, RAB11A, Rabin8/RAB3IP, ARF4 and RAB11FIP3; the complex regulates Golgi-to-cilia rhodopsin/RHO transport in photoreceptors. Post-translationally, phosphorylated on some or all of the serine and threonine residues present in the C-terminal region. Contains one covalently linked retinal chromophore. Upon light absorption, the covalently bound 11-cis-retinal is converted to all-trans-retinal. After hydrolysis of the Schiff base and release of the covalently bound all-trans-retinal, active rhodopsin is regenerated by binding of a fresh molecule of 11-cis-retinal. In terms of tissue distribution, expressed in rod-shaped photoreceptor cells in the retina that mediate vision in dim light (at protein level).

The protein resides in the membrane. The protein localises to the cell projection. It is found in the cilium. It localises to the photoreceptor outer segment. Functionally, photoreceptor required for image-forming vision at low light intensity. Required for photoreceptor cell viability after birth. Light-induced isomerization of 11-cis to all-trans retinal triggers a conformational change that activates signaling via G-proteins. Subsequent receptor phosphorylation mediates displacement of the bound G-protein alpha subunit by the arrestin SAG and terminates signaling. This chain is Rhodopsin (RHO), found in Bos taurus (Bovine).